Reading from the N-terminus, the 825-residue chain is MDVSLCPAKCSFWRIFLLGSVWLDYVGSVLACPANCVCSKTEINCRRPDDGNLFPLLEGQDSGNSNGNASINITDISRNITSIHIENWRSLHTLNAVDMELYTGLQKLTIRNSGLRSIQPRAFAKNPHLRYINLSSNRLTTLSWQLFQTLSLRELQLEQNFFNCSCDIRWMQLWQEQGEAKLNNQNLYCINADGSQLPLFRMNISQCDLPEISVSHVNLTVREGDNAVITCNGSGSPLPDVDWIVTGLQSINTHQTNLNWTNVHAINLTLVNVTSEDNGFTLTCIAENVVGMSNASVALTVYYPPRVVSLEEPELRLEHCIEFVVRGNPPPTLHWLHNGQPLRESKIIHVEYYQEGEISEGCLLFNKPTHYNNGNYTLIAKNPLGTANQTINGHFLKEPFPESTDNFILFDEVSPTPPITVTHKPEEDTFGVSIAVGLAAFACVLLVVLFIMINKYGRRSKFGMKGPVAVISGEEDSASPLHHINHGITTPSSLDAGPDTVVIGMTRIPVIENPQYFRQGHNCHKPDTYVQHIKRRDIVLKRELGEGAFGKVFLAECYNLSPTKDKMLVAVKALKDPTLAARKDFQREAELLTNLQHEHIVKFYGVCGDGDPLIMVFEYMKHGDLNKFLRAHGPDAMILVDGQPRQAKGELGLSQMLHIASQIASGMVYLASQHFVHRDLATRNCLVGANLLVKIGDFGMSRDVYSTDYYRVGGHTMLPIRWMPPESIMYRKFTTESDVWSFGVILWEIFTYGKQPWFQLSNTEVIECITQGRVLERPRVCPKEVYDVMLGCWQREPQQRLNIKEIYKILHALGKATPIYLDILG.

Positions 1-31 (MDVSLCPAKCSFWRIFLLGSVWLDYVGSVLA) are cleaved as a signal peptide. 2 disulfide bridges follow: C32–C38 and C36–C45. Residues 32-429 (CPANCVCSKT…TVTHKPEEDT (398 aa)) are Extracellular-facing. 3 N-linked (GlcNAc...) asparagine glycosylation sites follow: N68, N72, and N79. LRR repeat units follow at residues 104 to 125 (GLQKLTIRNSGLRSIQPRAFAK) and 128 to 149 (HLRYINLSSNRLTTLSWQLFQT). N-linked (GlcNAc...) asparagine glycosylation is found at N133 and N163. Residues 160-209 (NFFNCSCDIRWMQLWQEQGEAKLNNQNLYCINADGSQLPLFRMNISQCDL) enclose the LRRCT domain. 2 disulfide bridges follow: C164–C189 and C166–C207. N-linked (GlcNAc...) asparagine glycans are attached at residues N203, N218, N232, N259, N267, N272, and N294. 2 Ig-like C2-type domains span residues 210–300 (PEIS…VALT) and 309–382 (SLEE…IAKN). The cysteines at positions 231 and 284 are disulfide-linked. An intrachain disulfide couples C320 to C362. N-linked (GlcNAc...) asparagine glycosylation is found at N375 and N388. The chain crosses the membrane as a helical span at residues 430-453 (FGVSIAVGLAAFACVLLVVLFIMI). Residues 454–825 (NKYGRRSKFG…ATPIYLDILG (372 aa)) lie on the Cytoplasmic side of the membrane. The residue at position 493 (S493) is a Phosphoserine. Position 516 is a phosphotyrosine; by autocatalysis (Y516). The region spanning 538–825 (IVLKRELGEG…ATPIYLDILG (288 aa)) is the Protein kinase domain. Residues 544 to 552 (LGEGAFGKV) and K572 each bind ATP. D679 (proton acceptor) is an active-site residue. Phosphotyrosine; by autocatalysis occurs at positions 705, 709, and 710.

This sequence belongs to the protein kinase superfamily. Tyr protein kinase family. Insulin receptor subfamily. Exists in a dynamic equilibrium between monomeric (low affinity) and dimeric (high affinity) structures. Binds SH2B2. Interacts with SQSTM1 and KIDINS220. Interacts with PTPRS. Interacts with MAPK8IP3/JIP3. In terms of processing, ligand-mediated auto-phosphorylation.

The protein resides in the membrane. It carries out the reaction L-tyrosyl-[protein] + ATP = O-phospho-L-tyrosyl-[protein] + ADP + H(+). In terms of biological role, receptor tyrosine kinase involved in nervous system and probably heart development. Upon binding of its ligand NTF3/neurotrophin-3, NTRK3 autophosphorylates and activates different signaling pathways, including the phosphatidylinositol 3-kinase/AKT and the MAPK pathways, that control cell survival and differentiation. This is NT-3 growth factor receptor (NTRK3) from Macaca fascicularis (Crab-eating macaque).